A 3117-amino-acid chain; its full sequence is MRSSKSKEVPLPNPRNSQSKDTVQADITTSWDALSQTKAALRHIENKLEVAPTSTAVCDSVMDTKKSSTSATRKISRKDGRYLDDSWVNAPISKSTKSRKEKSRSPLRATTLESNVKKNNRVEFREPLVSYREIHGAPSNFSSSHLESKHVYCVDVNEEKTESGNWMIGSREERNIRSCDFESSQSSVINDTVVRFLNDRPAIDALQNSECLIRMGASMRTEEEMPNRTKGSENNLKLSVNNMAHDTDPKALRLTDSSPSSTSTSNSQRLDILKRRQHDVKLEKLKERIRKQWEHSEETNGRGQKLGHIDHPVMVVNVDNSVTAKVRKVATAPPAPAYKGFNPSETKIRTPDGKVWQEAEFQNMSRELYRDLALHFADDISIKEKPAEKSKEKKVVKPVRKVQKVAQLSSTECRTGSSHLISTSSWRDGQKLVKKILGPAPRMEPKEQRTASSDRGGRERTAKSGGHIGRAESDPRLDVLHRHLQRNSERSRSKSRSENNIKKLASSLPDNKQEENTALNKDFLPIEIRGILDDLQLDSTAHTAKQDTVELQNQKSSAPVHAPRSHSPVKRKPDKITANEDPPVISKRRHYDTDEVRQYIVRQQEERKRKQNEEKKAQKEATEQKNKRLQELYRKQKEAFTKVKNVPPSEPSATRRLQETYSKLLLEKTLLEEPSHQHVTQETQAKPGYQPSGESDKENKVQERPPSASSSSDMSLSEPPQPLARKDLMESTWMQPERLSPQVHHSQPQPFAGTAGSLLSHLLSLEHVGILHKDFESILPTRKNHNMASRPLTFTPQPYVTSPAAYTDALLKPSASQYKSKLDRIEALKATAASLSSRIESEAKKLAGASINYGSAWNTEYDVQQAPQEDGPWTKAVTPPVKDDNEDVFSARIQKMLGSCVSHATFDDDLPGVGNLSEFKKLPEMIRPQSAISSFRVRSPGPKPEGLLAQLCKRQTDSSSSDMQACSQDKAKISLGSSIDSVSEGPLLSEGSLSEEEGDQDGQPLLKVAEILKEKEFCPGERNSYEPIKEFQKEAEKFLPLFGHIGGTQSKGPWEELAKGSPHSVINIFTKSYQLYGKGFEDKLDRGTSTSRPLNATATPLSGVSYEDDFVSSPGTGTSTEKKSTLEPHSTLSPQEDHSNRKSAYDPSSVDVTSQHSSGAQSAASSRSSTSSKGKKGKKEKTEWLDSFTGNVQNSLLDEEKAERGSHQGKKSGTSSKLSVKDFEQTLDTDSTLEDLSGHSVSVSSDKGRSQKTPTSPLSPSSQKSLQFDVAGTSSERSKSSVMPPTITGFKPNAPLTDLNPAASRTTTENMAPIPGSKRFSPAGLHHRMAAELSYLNAIEESVRQLSDVERVRGISLAQQESVSLAQIIKAQQQRHERDLALLKLKAEQEALESQRQLEETRNKAAQVHAESLQQVVQSQREVTEVLQEATCKIAAQQSETARLTTDAARQICEMAELTRTHISDAVVASGAPLAILYDHQRQHLPDFVKQLRTRTETDRKSPSVSLSQSKEGTLDSKHQKYSASYDSYSESSGYKNHDRRSSSGSSRQESPSVPSCKENEKKLNGEKIESSIDEQVQTAADDSLRSDSVPSLPDEKDSTSIATEYSLKFDESMTEDEIEEQSFRSLLPSESHRRFNMEKRRGHHDDSDEEASPEKTTLSTAKELNMPFSGGQDSFSKFTMEMVRQYMKEEEMRAAHQSSLLRLREKALKEKTKAELAWLEHQKKHLRDKGEDDKMPPLRKKQRGLLLRLQQEKAEIKRLQEANKAARKERQLILKQQEEIEKIRQTTIKLQEKLKSAGESKLDSHSDDDTKDNKATSPGPTDLETRSPSPISISSSETSSIMQKLKKMRSRMDEKFLTKREQKLMQRRQHAEELLEWKRRLDAEEAEIRQMEKQALAAWDKELIKPKTPKKELEDQRTEQKEIASEEESPVPLYSHLNSESSIPEELGSPAVEYVPSESIGQEQPGSPDHSILTEEMICSQELESSTSPSKHSLPKSCTSVSKQESSKGSHRTGGQCHLPIKSHQHCYSWSDESLSMTQSETTSDQSDIEGRIRALKDELRKRKSVVNQLKKEQKKRQKERLKAQEASLIKQLESYDEFIKKTEAELSQDLETSPTAKPQIKTLSSASEKPKIKPLTPLHRSETAKNWKSLTESERSRGSLESIAEHVDASLSGSERSVSERSLSAYAKRVNEWDSRTEDFQTPSPVLRSSRKIREESGDSLENVPALHLLKELNATSRILDMSDGKVGESSKKSEIKEIEYTKLKKSKIEDAFSKEGKSDVLLKLVLEQGDSSEILSKKDLPLDSENVQKDLVGLAIENLHKSEEMLKERQSDQDMNHSPNIQSGKDIHEQKNTKEKDLSWSEHLFAPKEIPYSEDFEVSSFKKEISAELYKDDFEVSSLLSLRKDSQSCRDKPQPMRSSTSGATSFGSNEEISECLSEKSLSIHSNVHSDRLLELKSPTELMKSKERSDVEHEQQVTESPSLASVPTADELFDFHIGDRVLIGNVQPGILRFKGETSFAKGFWAGVELDKPEGNNNGTYDGIAYFECKEKHGIFAPPQKISHIPENFDDYVDINEDEDCYSDERYQCYNQEQNDTEGPKDREKDVSEYFYEKSLPSVNDIEASVNRSRSLKIETDNVQDISGVLEAHVHQQSSVDSQISSKENKDLISDATEKVSIAAEDDTLDNTFSEELEKQQQFTEEEDNLYAEASEKLCTPLLDLLTREKNQLEAQLKSSLNEEKKSKQQLEKISLLTDSLLKVFVKDTVNQLQQIKKTRDEKIQLSNQELLGDDQKKVTPQDLSQNVEEQSPSISGCFLSSELEDEKEEISSPDMCPRPESPVFGASGQEELAKRLAELELSREFLSALGDDQDWFDEDFGLSSSHKIQKNKAEETIVPLMAEPKRVTQQPCETLLAVPHTAEEVEILVHNAAEELWKWKELGHDLHSISIPTKLLGCASKGLDIESTSKRVYKQAVFDLTKEIFEEIFAEDPNLNQPVWMKPCRINSSYFRRVKNPNNLDEIKSFIASEVLKLFSLKKEPNHKTDWQKMMKFGRKKRDRVDHILVQELHEEEAQWVNYDEDELCVKMQLADGIFETLIKDTIDVLNQISEKQGRMLLV.

The segment at 1–24 is disordered; that stretch reads MRSSKSKEVPLPNPRNSQSKDTVQ. Positions 14 to 24 are enriched in polar residues; sequence PRNSQSKDTVQ. 4 positions are modified to phosphoserine: serine 86, serine 139, serine 142, and serine 218. Disordered regions lie at residues 249 to 275, 436 to 514, 548 to 625, and 671 to 722; these read PKALRLTDSSPSSTSTSNSQRLDILKR, ILGP…NKQE, TVEL…TEQK, and LEEP…PPQP. Residues 255-267 show a composition bias toward low complexity; that stretch reads TDSSPSSTSTSNS. The segment covering 469 to 501 has biased composition (basic and acidic residues); sequence GRAESDPRLDVLHRHLQRNSERSRSKSRSENNI. Residues serine 473 and serine 507 each carry the phosphoserine modification. Over residues 563–573 the composition is skewed to basic residues; the sequence is PRSHSPVKRKP. 2 stretches are compositionally biased toward basic and acidic residues: residues 591–625 and 694–703; these read YDTDEVRQYIVRQQEERKRKQNEEKKAQKEATEQK and ESDKENKVQE. Residues 598 to 645 adopt a coiled-coil conformation; it reads QYIVRQQEERKRKQNEEKKAQKEATEQKNKRLQELYRKQKEAFTKVKN. Position 695 is a phosphoserine (serine 695). Over residues 705–718 the composition is skewed to low complexity; the sequence is PPSASSSSDMSLSE. Threonine 878 is subject to Phosphothreonine. Position 939 is a phosphoserine (serine 939). Over residues 981–992 the composition is skewed to low complexity; it reads SVSEGPLLSEGS. The disordered stretch occupies residues 981-1002; it reads SVSEGPLLSEGSLSEEEGDQDG. Phosphoserine is present on serine 1061. The interval 1081-1298 is disordered; that stretch reads EDKLDRGTST…GFKPNAPLTD (218 aa). Positions 1087 to 1102 are enriched in polar residues; sequence GTSTSRPLNATATPLS. The segment covering 1135 to 1144 has biased composition (basic and acidic residues); sequence QEDHSNRKSA. Composition is skewed to low complexity over residues 1153–1172 and 1251–1267; these read TSQHSSGAQSAASSRSSTSS and QKTPTSPLSPSSQKSLQ. Threonine 1253 is modified (phosphothreonine). Phosphoserine occurs at positions 1256 and 1259. Residues 1272–1283 show a composition bias toward polar residues; it reads GTSSERSKSSVM. Residues 1369 to 1411 adopt a coiled-coil conformation; that stretch reads IKAQQQRHERDLALLKLKAEQEALESQRQLEETRNKAAQVHAE. Disordered stretches follow at residues 1494 to 1674 and 1794 to 1854; these read TRTE…GGQD and KLKS…SRMD. The span at 1503–1512 shows a compositional bias: polar residues; the sequence is PSVSLSQSKE. Composition is skewed to low complexity over residues 1522 to 1535 and 1543 to 1556; these read YSASYDSYSESSGY and SSGSSRQESPSVPS. Over residues 1558–1571 the composition is skewed to basic and acidic residues; it reads KENEKKLNGEKIES. Serine 1613 is subject to Phosphoserine. Positions 1631–1647 are enriched in basic and acidic residues; the sequence is ESHRRFNMEKRRGHHDD. 2 positions are modified to phosphoserine: serine 1648 and serine 1653. The stretch at 1707 to 1800 forms a coiled coil; it reads KALKEKTKAE…LQEKLKSAGE (94 aa). Basic and acidic residues predominate over residues 1794 to 1815; the sequence is KLKSAGESKLDSHSDDDTKDNK. Phosphoserine is present on serine 1818. Over residues 1827–1841 the composition is skewed to low complexity; that stretch reads RSPSPISISSSETSS. Residues 1856 to 1899 are a coiled coil; the sequence is KFLTKREQKLMQRRQHAEELLEWKRRLDAEEAEIRQMEKQALAA. Residues 1903–1925 are compositionally biased toward basic and acidic residues; sequence ELIKPKTPKKELEDQRTEQKEIA. Disordered stretches follow at residues 1903 to 2020, 2107 to 2221, 2329 to 2356, and 2407 to 2432; these read ELIK…QCHL, ELSQ…ESGD, LKERQSDQDMNHSPNIQSGKDIHEQKNT, and KDSQSCRDKPQPMRSSTSGATSFGSN. The residue at position 1936 (serine 1936) is a Phosphoserine. Positions 1983 to 2005 are enriched in polar residues; it reads ELESSTSPSKHSLPKSCTSVSKQ. Positions 2051 to 2110 form a coiled coil; sequence EGRIRALKDELRKRKSVVNQLKKEQKKRQKERLKAQEASLIKQLESYDEFIKKTEAELSQ. A compositionally biased stretch (polar residues) spans 2111 to 2129; the sequence is DLETSPTAKPQIKTLSSAS. Serine 2115 bears the Phosphoserine mark. Over residues 2141–2170 the composition is skewed to basic and acidic residues; that stretch reads HRSETAKNWKSLTESERSRGSLESIAEHVD. Polar residues predominate over residues 2173–2184; that stretch reads LSGSERSVSERS. The segment covering 2191–2201 has biased composition (basic and acidic residues); sequence RVNEWDSRTED. Threonine 2204 is modified (phosphothreonine). Serine 2206 carries the post-translational modification Phosphoserine. Composition is skewed to basic and acidic residues over residues 2329 to 2338 and 2407 to 2417; these read LKERQSDQDM and KDSQSCRDKPQ. Over residues 2419–2432 the composition is skewed to polar residues; that stretch reads MRSSTSGATSFGSN. Serine 2431 and serine 2460 each carry phosphoserine. Residues 2465-2478 show a composition bias toward basic and acidic residues; it reads MKSKERSDVEHEQQ. Positions 2465–2485 are disordered; that stretch reads MKSKERSDVEHEQQVTESPSL. A CAP-Gly domain is found at 2517-2559; the sequence is GETSFAKGFWAGVELDKPEGNNNGTYDGIAYFECKEKHGIFAP. Threonine 2689 is modified (phosphothreonine). Residues 2719–2752 are a coiled coil; it reads LLDLLTREKNQLEAQLKSSLNEEKKSKQQLEKIS. Serine 2830 and serine 2839 each carry phosphoserine.

Part of a ternary complex that contains CEP350, CEP43 and MAPRE1. Interacts (via C-terminus) directly with CEP43 (via N-terminus). Interacts with NR1H3, PPARA, PPARD and PPARG. Interacts directly with microtubules. Interacts with the fusion protein CEP43-FGFR1, and by doing so recruits and activates PI3K and PLC-gamma. Interacts with CYLD. Interacts with CFAP157. Interacts with CEP19 (via C-terminus). Interacts with CEP78; promoting CEP78 localization to centrosome and centriole. Post-translationally, phosphorylated during mitosis. As to expression, detected in heart, brain, skeletal muscle, testis, placenta, lung, liver, kidney and pancreas.

Its subcellular location is the cytoplasm. It is found in the cytoskeleton. It localises to the microtubule organizing center. The protein localises to the centrosome. The protein resides in the spindle. Its subcellular location is the nucleus. It is found in the centriole. It localises to the cilium basal body. Functionally, plays an essential role in centriole growth by stabilizing a procentriolar seed composed of at least, SASS6 and CPAP. Required for anchoring microtubules to the centrosomes and for the integrity of the microtubule network. Recruits PPARA to discrete subcellular compartments and thereby modulates PPARA activity. Required for ciliation. This chain is Centrosome-associated protein 350, found in Homo sapiens (Human).